Consider the following 225-residue polypeptide: Enolase-phosphatase E1 (225 aa).

Belongs to the HAD-like hydrolase superfamily. MasA/MtnC family. Monomer. It depends on Mg(2+) as a cofactor.

The enzyme catalyses 5-methylsulfanyl-2,3-dioxopentyl phosphate + H2O = 1,2-dihydroxy-5-(methylsulfanyl)pent-1-en-3-one + phosphate. The protein operates within amino-acid biosynthesis; L-methionine biosynthesis via salvage pathway; L-methionine from S-methyl-5-thio-alpha-D-ribose 1-phosphate: step 3/6. Its pathway is amino-acid biosynthesis; L-methionine biosynthesis via salvage pathway; L-methionine from S-methyl-5-thio-alpha-D-ribose 1-phosphate: step 4/6. Functionally, bifunctional enzyme that catalyzes the enolization of 2,3-diketo-5-methylthiopentyl-1-phosphate (DK-MTP-1-P) into the intermediate 2-hydroxy-3-keto-5-methylthiopentenyl-1-phosphate (HK-MTPenyl-1-P), which is then dephosphorylated to form the acireductone 1,2-dihydroxy-3-keto-5-methylthiopentene (DHK-MTPene). The polypeptide is Enolase-phosphatase E1 (Shewanella woodyi (strain ATCC 51908 / MS32)).